Reading from the N-terminus, the 250-residue chain is DNA repair protein RecO (250 aa).

The protein belongs to the RecO family.

Its function is as follows. Involved in DNA repair and RecF pathway recombination. This is DNA repair protein RecO from Staphylococcus aureus (strain MRSA252).